The primary structure comprises 425 residues: Lysosome-associated membrane glycoprotein 2 (425 aa).

The first 27 residues, 1-27, serve as a signal peptide directing secretion; that stretch reads MAPPRCPAGLALLLLLLGACGFFQSYA. Residues 28–192 form a first lumenal domain region; the sequence is VEVDVKDASN…SKKESRCYAD (165 aa). The Lumenal portion of the chain corresponds to 28–389; it reads VEVDVKDASN…EECFADSDLN (362 aa). Asn37, Asn56, Asn62, Asn74, Asn100, Asn105, Asn120, Asn163, Asn170, Asn179, Asn206, Asn232, Asn239, Asn252, Asn276, Asn287, Asn298, Asn312, Asn320, and Asn331 each carry an N-linked (GlcNAc...) asparagine glycan. Residues Cys40 and Cys78 are joined by a disulfide bond. Cysteines 153 and 189 form a disulfide. Residues 193-238 form a hinge region; that stretch reads TPTAAPTVLPTVANVTTASTTISPAPTTAPKPAENPVTGNYSLKTG. The tract at residues 239–390 is second lumenal domain; that stretch reads NKTCLLATVG…ECFADSDLNF (152 aa). Cys242 and Cys274 form a disulfide bridge. Cys345 and Cys382 are disulfide-bonded. Residues 390 to 414 traverse the membrane as a helical segment; sequence FLIPVAVGMALGFLIILVFISYIIG. At 415-425 the chain is on the cytoplasmic side; sequence RRKSRTGYQSV. The segment at 416 to 419 is important for binding and subsequent lysosomal degradation of target proteins; sequence RKSR.

Belongs to the LAMP family. Monomer. Forms large homooligomers. Post-translationally, extensively N-glycosylated. Contains a minor proportion of O-linked glycans.

It is found in the lysosome membrane. The protein resides in the endosome membrane. The protein localises to the cell membrane. It localises to the cytoplasmic vesicle. Its subcellular location is the autophagosome membrane. In terms of biological role, lysosomal membrane glycoprotein which plays an important role in lysosome biogenesis, lysosomal pH regulation and autophagy. Plays an important role in chaperone-mediated autophagy, a process that mediates lysosomal degradation of proteins in response to various stresses and as part of the normal turnover of proteins with a long biological half-live. In the chaperone-mediated autophagy, acts downstream of chaperones, such as HSPA8/HSC70, which recognize and bind substrate proteins and mediate their recruitment to lysosomes, where target proteins bind LAMP2. Plays a role in lysosomal protein degradation in response to starvation. Required for the fusion of autophagosomes with lysosomes during autophagy. The protein is Lysosome-associated membrane glycoprotein 2 (LAMP2) of Gallus gallus (Chicken).